Here is a 395-residue protein sequence, read N- to C-terminus: Acid ceramidase (395 aa).

The first 21 residues, 1-21 (MPGRSRVALVLLAAAVSCAVA), serve as a signal peptide directing secretion. A disulfide bond links Cys-31 and Cys-340. The active-site Nucleophile is the Cys-143. Residues Asn-195, Asn-259, Asn-286, and Asn-342 are each glycosylated (N-linked (GlcNAc...) asparagine). Cysteines 388 and 392 form a disulfide.

The protein belongs to the acid ceramidase family. Heterodimer; disulfide-linked. The heterodimer is composed of the disulfide-linked alpha and beta chains produced by autocatalytic cleavage of the precursor. N-glycosylated. Post-translationally, proteolytically cleaved into two chains alpha and beta that remain associated via a disulfide bond. Cleavage gives rise to a conformation change that activates the enzyme. The same catalytic Cys residue mediates the autoproteolytic cleavage and subsequent hydrolysis of lipid substrates. The beta chain may undergo an additional C-terminal processing.

Its subcellular location is the lysosome. The protein localises to the secreted. It carries out the reaction an N-acylsphing-4-enine + H2O = sphing-4-enine + a fatty acid. The catalysed reaction is N-dodecanoylsphing-4-enine + H2O = dodecanoate + sphing-4-enine. It catalyses the reaction N-tetradecanoylsphing-4-enine + H2O = tetradecanoate + sphing-4-enine. The enzyme catalyses N-hexadecanoylsphing-4-enine + H2O = sphing-4-enine + hexadecanoate. It carries out the reaction N-octadecanoylsphing-4-enine + H2O = sphing-4-enine + octadecanoate. The catalysed reaction is N-dodecanoyl-(4R)-hydroxysphinganine + H2O = (4R)-hydroxysphinganine + dodecanoate. It catalyses the reaction N-(dodecanoyl)-sphinganine + H2O = dodecanoate + sphinganine. The enzyme catalyses N-(acetyl)-sphing-4-enine + H2O = sphing-4-enine + acetate. It carries out the reaction N-(hexanoyl)sphing-4-enine + H2O = hexanoate + sphing-4-enine. The catalysed reaction is N-octanoylsphing-4-enine + H2O = octanoate + sphing-4-enine. It catalyses the reaction N-(9Z-octadecenoyl)-sphing-4-enine + H2O = sphing-4-enine + (9Z)-octadecenoate. The enzyme catalyses N-dodecanoylethanolamine + H2O = dodecanoate + ethanolamine. The protein operates within lipid metabolism; sphingolipid metabolism. In terms of biological role, lysosomal ceramidase that hydrolyzes sphingolipid ceramides into sphingosine and free fatty acids at acidic pH. Ceramides, sphingosine, and its phosphorylated form sphingosine-1-phosphate are bioactive lipids that mediate cellular signaling pathways regulating several biological processes including cell proliferation, apoptosis and differentiation. Has a higher catalytic efficiency towards C12-ceramides versus other ceramides. Also catalyzes the reverse reaction allowing the synthesis of ceramides from fatty acids and sphingosine. For the reverse synthetic reaction, the natural sphingosine D-erythro isomer is more efficiently utilized as a substrate compared to D-erythro-dihydrosphingosine and D-erythro-phytosphingosine, while the fatty acids with chain lengths of 12 or 14 carbons are the most efficiently used. Also has an N-acylethanolamine hydrolase activity. By regulating the levels of ceramides, sphingosine and sphingosine-1-phosphate in the epidermis, mediates the calcium-induced differentiation of epidermal keratinocytes. Also indirectly regulates tumor necrosis factor/TNF-induced apoptosis. By regulating the intracellular balance between ceramides and sphingosine, in adrenocortical cells, probably also acts as a regulator of steroidogenesis. This is Acid ceramidase from Pan troglodytes (Chimpanzee).